The primary structure comprises 127 residues: Major sperm protein 38 (127 aa).

Ala-2 is modified (N-acetylalanine). Residues 9 to 126 (DIQTQPGTKI…RRKNLPIEYN (118 aa)) enclose the MSP domain.

Sperm.

The protein resides in the cell projection. Its subcellular location is the pseudopodium. It localises to the cytoplasm. The protein localises to the cytoskeleton. Its function is as follows. Central component in molecular interactions underlying sperm crawling. Forms an extensive filament system that extends from sperm villipoda, along the leading edge of the pseudopod. In Caenorhabditis elegans, this protein is Major sperm protein 38 (msp-38).